Consider the following 380-residue polypeptide: RNA binding protein fox-1 homolog 2 (380 aa).

Polar residues-rich tracts occupy residues Met-1–Thr-20 and Asn-36–Glu-56. The disordered stretch occupies residues Met-1–Ile-117. Low complexity predominate over residues Ser-72–Asn-102. Positions Lys-110–Ala-186 constitute an RRM domain.

It localises to the nucleus. The protein resides in the cytoplasm. Functionally, RNA-binding protein that regulates alternative splicing events by binding to 5'-UGCAUGU-3' elements. Regulates alternative splicing of tissue-specific exons. In Xenopus tropicalis (Western clawed frog), this protein is RNA binding protein fox-1 homolog 2 (rbfox2).